We begin with the raw amino-acid sequence, 262 residues long: Tryptophan synthase alpha chain (262 aa).

Residues glutamate 48 and aspartate 59 each act as proton acceptor in the active site.

It belongs to the TrpA family. Tetramer of two alpha and two beta chains.

The catalysed reaction is (1S,2R)-1-C-(indol-3-yl)glycerol 3-phosphate + L-serine = D-glyceraldehyde 3-phosphate + L-tryptophan + H2O. It participates in amino-acid biosynthesis; L-tryptophan biosynthesis; L-tryptophan from chorismate: step 5/5. Functionally, the alpha subunit is responsible for the aldol cleavage of indoleglycerol phosphate to indole and glyceraldehyde 3-phosphate. In Helicobacter pylori (strain Shi470), this protein is Tryptophan synthase alpha chain.